The chain runs to 144 residues: Large ribosomal subunit protein uL13 (144 aa).

This sequence belongs to the universal ribosomal protein uL13 family. Part of the 50S ribosomal subunit.

In terms of biological role, this protein is one of the early assembly proteins of the 50S ribosomal subunit, although it is not seen to bind rRNA by itself. It is important during the early stages of 50S assembly. The sequence is that of Large ribosomal subunit protein uL13 from Nitrosospira multiformis (strain ATCC 25196 / NCIMB 11849 / C 71).